The following is a 121-amino-acid chain: Small ribosomal subunit protein uS13 (121 aa).

Residues 94-121 form a disordered region; that stretch reads GLPVRGQRTRTNSRTRKGPKKGAAALKK.

The protein belongs to the universal ribosomal protein uS13 family. Part of the 30S ribosomal subunit. Forms a loose heterodimer with protein S19. Forms two bridges to the 50S subunit in the 70S ribosome.

Its function is as follows. Located at the top of the head of the 30S subunit, it contacts several helices of the 16S rRNA. In the 70S ribosome it contacts the 23S rRNA (bridge B1a) and protein L5 of the 50S subunit (bridge B1b), connecting the 2 subunits; these bridges are implicated in subunit movement. Contacts the tRNAs in the A and P-sites. This Leptothrix cholodnii (strain ATCC 51168 / LMG 8142 / SP-6) (Leptothrix discophora (strain SP-6)) protein is Small ribosomal subunit protein uS13.